We begin with the raw amino-acid sequence, 426 residues long: F-box protein At2g15640 (426 aa).

Residues 1 to 48 (MNPSTITNDLTVEILSRLPAKSVARFHCVSKQWGSIFGSPYFKELFLT) form the F-box domain.

The protein is F-box protein At2g15640 of Arabidopsis thaliana (Mouse-ear cress).